The chain runs to 411 residues: Kelch domain-containing protein 10 (411 aa).

Kelch repeat units lie at residues 72 to 133 (NLYV…LHGH), 135 to 186 (LLVF…IIHG), 187 to 239 (FLYV…HDGQ), 240 to 288 (RIYV…RRCH), 296 to 342 (EVFI…AVTP), and 345 to 388 (CMYI…YFPH).

Belongs to the KLHDC10 family. In terms of assembly, component of a CRL2 E3 ubiquitin-protein ligase complex, also named ECS (Elongin BC-CUL2/5-SOCS-box protein) complex, composed of CUL2, Elongin BC (ELOB and ELOC), RBX1 and substrate-specific adapter KLHDC10.

It functions in the pathway protein modification; protein ubiquitination. In terms of biological role, substrate-recognition component of a Cul2-RING (CRL2) E3 ubiquitin-protein ligase complex of the DesCEND (destruction via C-end degrons) pathway, which recognizes a C-degron located at the extreme C terminus of target proteins, leading to their ubiquitination and degradation. The C-degron recognized by the DesCEND pathway is usually a motif of less than ten residues and can be present in full-length proteins, truncated proteins or proteolytically cleaved forms. The CRL2(KLHDC10) complex specifically recognizes proteins with a proline-glycine (Pro-Gly) or an alanine tail (CAT tail) at the C-terminus, leading to their ubiquitination and degradation. The CRL2(KLHDC10) complex is involved in the ribosome-associated quality control (RQC) pathway, which mediates the extraction of incompletely synthesized nascent chains from stalled ribosomes: CRL2(KLHDC10) acts downstream of NEMF and recognizes CAT tails associated with stalled nascent chains, leading to their ubiquitination and degradation. The chain is Kelch domain-containing protein 10 from Xenopus tropicalis (Western clawed frog).